Reading from the N-terminus, the 248-residue chain is Probable septum site-determining protein MinC (248 aa).

Residues 94-125 (GMPPAMRGGQPAADFEAPAGEPQANPGAPEPQ) are disordered.

The protein belongs to the MinC family. As to quaternary structure, interacts with MinD and FtsZ.

Its function is as follows. Cell division inhibitor that blocks the formation of polar Z ring septums. Rapidly oscillates between the poles of the cell to destabilize FtsZ filaments that have formed before they mature into polar Z rings. Prevents FtsZ polymerization. This is Probable septum site-determining protein MinC from Brucella abortus (strain S19).